Here is a 728-residue protein sequence, read N- to C-terminus: Polyribonucleotide nucleotidyltransferase (728 aa).

Mg(2+) is bound by residues D488 and D494. The KH domain maps to 555–614 (PRMITMKIHPDKIREVIGKGGSTIQALTKETGTTIDIQEDGTITIASTSTDGMAEAKRRI). One can recognise an S1 motif domain in the interval 624 to 692 (GKIYNGTVLK…EKGRLRLSLK (69 aa)). Residues 702-728 (ISPVNAGEAAPAPAPAAAPATPSDQQQ) form a disordered region. A compositionally biased stretch (low complexity) spans 710–721 (AAPAPAPAAAPA).

This sequence belongs to the polyribonucleotide nucleotidyltransferase family. Requires Mg(2+) as cofactor.

Its subcellular location is the cytoplasm. The catalysed reaction is RNA(n+1) + phosphate = RNA(n) + a ribonucleoside 5'-diphosphate. Its function is as follows. Involved in mRNA degradation. Catalyzes the phosphorolysis of single-stranded polyribonucleotides processively in the 3'- to 5'-direction. The polypeptide is Polyribonucleotide nucleotidyltransferase (Cupriavidus pinatubonensis (strain JMP 134 / LMG 1197) (Cupriavidus necator (strain JMP 134))).